The chain runs to 435 residues: Transforming growth factor beta-2 proprotein (435 aa).

An N-terminal signal peptide occupies residues 1 to 20 (MHYCVLSAFLLLHLVTVALS). N72, N140, and N241 each carry an N-linked (GlcNAc...) asparagine glycan. 4 cysteine pairs are disulfide-bonded: C309/C318, C317/C380, C346/C411, and C350/C413.

It belongs to the TGF-beta family. In terms of assembly, interacts with the serine proteases, HTRA1 and HTRA3. Interacts with ASPN. Interacts with MFAP5. As to quaternary structure, interacts with Transforming growth factor beta-2 (TGF-beta-2) chain; interaction is non-covalent and maintains (TGF-beta-2) in a latent state. Interacts with LRRC32/GARP; leading to regulate activation of TGF-beta-2. Interacts with NREP; the interaction results in a decrease in TGFB2 autoinduction. Transforming growth factor beta-2: Homodimer; disulfide-linked. Transforming growth factor beta-2: Interacts with TGF-beta receptors (TGFBR1 and TGFBR2), leading to signal transduction. The precursor proprotein is cleaved in the Golgi apparatus to form Transforming growth factor beta-2 (TGF-beta-2) and Latency-associated peptide (LAP) chains, which remain non-covalently linked, rendering TGF-beta-2 inactive.

Its subcellular location is the secreted. The protein localises to the extracellular space. It is found in the extracellular matrix. In terms of biological role, precursor of the Latency-associated peptide (LAP) and Transforming growth factor beta-2 (TGF-beta-2) chains, which constitute the regulatory and active subunit of TGF-beta-2, respectively. Required to maintain the Transforming growth factor beta-2 (TGF-beta-2) chain in a latent state during storage in extracellular matrix. Associates non-covalently with TGF-beta-2 and regulates its activation via interaction with 'milieu molecules', such as LTBP1 and LRRC32/GARP, that control activation of TGF-beta-2. Functionally, multifunctional protein that regulates various processes such as angiogenesis and heart development. Activation into mature form follows different steps: following cleavage of the proprotein in the Golgi apparatus, Latency-associated peptide (LAP) and Transforming growth factor beta-2 (TGF-beta-2) chains remain non-covalently linked rendering TGF-beta-2 inactive during storage in extracellular matrix. At the same time, LAP chain interacts with 'milieu molecules', such as LTBP1 and LRRC32/GARP, that control activation of TGF-beta-2 and maintain it in a latent state during storage in extracellular milieus. Once activated following release of LAP, TGF-beta-2 acts by binding to TGF-beta receptors (TGFBR1 and TGFBR2), which transduce signal. This chain is Transforming growth factor beta-2 proprotein (TGFB2), found in Sus scrofa (Pig).